The sequence spans 245 residues: Uridylate kinase (245 aa).

12–15 (KISG) provides a ligand contact to ATP. Gly-55 provides a ligand contact to UMP. The ATP site is built by Gly-56 and Arg-60. UMP is bound by residues Asp-76 and 137-144 (AGAPYLTT). Residues Thr-164, Tyr-171, and Asp-174 each contribute to the ATP site.

Belongs to the UMP kinase family. In terms of assembly, homohexamer.

The protein resides in the cytoplasm. The catalysed reaction is UMP + ATP = UDP + ADP. The protein operates within pyrimidine metabolism; CTP biosynthesis via de novo pathway; UDP from UMP (UMPK route): step 1/1. Its activity is regulated as follows. Inhibited by UTP. In terms of biological role, catalyzes the reversible phosphorylation of UMP to UDP. In Chlamydia muridarum (strain MoPn / Nigg), this protein is Uridylate kinase.